The sequence spans 88 residues: Small ribosomal subunit protein uS15 (88 aa).

This sequence belongs to the universal ribosomal protein uS15 family. Part of the 30S ribosomal subunit. Forms a bridge to the 50S subunit in the 70S ribosome, contacting the 23S rRNA.

Its function is as follows. One of the primary rRNA binding proteins, it binds directly to 16S rRNA where it helps nucleate assembly of the platform of the 30S subunit by binding and bridging several RNA helices of the 16S rRNA. Forms an intersubunit bridge (bridge B4) with the 23S rRNA of the 50S subunit in the ribosome. The sequence is that of Small ribosomal subunit protein uS15 from Pelobacter propionicus (strain DSM 2379 / NBRC 103807 / OttBd1).